The primary structure comprises 384 residues: Putative RNA methyltransferase slr0064 (384 aa).

One can recognise a THUMP domain in the interval 53–164; sequence LLYRINLWSR…QNHCQLSLDS (112 aa).

Belongs to the methyltransferase superfamily.

The polypeptide is Putative RNA methyltransferase slr0064 (Synechocystis sp. (strain ATCC 27184 / PCC 6803 / Kazusa)).